A 334-amino-acid polypeptide reads, in one-letter code: Holliday junction branch migration complex subunit RuvB (334 aa).

The tract at residues A4–Y184 is large ATPase domain (RuvB-L). Residues R24, G65, K68, T69, T70, E131–Y133, R174, Y184, and R221 each bind ATP. T69 contributes to the Mg(2+) binding site. The interval N185–D255 is small ATPAse domain (RuvB-S). The head domain (RuvB-H) stretch occupies residues G258–E334. DNA contacts are provided by R294, R313, and R318.

It belongs to the RuvB family. In terms of assembly, homohexamer. Forms an RuvA(8)-RuvB(12)-Holliday junction (HJ) complex. HJ DNA is sandwiched between 2 RuvA tetramers; dsDNA enters through RuvA and exits via RuvB. An RuvB hexamer assembles on each DNA strand where it exits the tetramer. Each RuvB hexamer is contacted by two RuvA subunits (via domain III) on 2 adjacent RuvB subunits; this complex drives branch migration. In the full resolvosome a probable DNA-RuvA(4)-RuvB(12)-RuvC(2) complex forms which resolves the HJ.

It localises to the cytoplasm. The enzyme catalyses ATP + H2O = ADP + phosphate + H(+). Functionally, the RuvA-RuvB-RuvC complex processes Holliday junction (HJ) DNA during genetic recombination and DNA repair, while the RuvA-RuvB complex plays an important role in the rescue of blocked DNA replication forks via replication fork reversal (RFR). RuvA specifically binds to HJ cruciform DNA, conferring on it an open structure. The RuvB hexamer acts as an ATP-dependent pump, pulling dsDNA into and through the RuvAB complex. RuvB forms 2 homohexamers on either side of HJ DNA bound by 1 or 2 RuvA tetramers; 4 subunits per hexamer contact DNA at a time. Coordinated motions by a converter formed by DNA-disengaged RuvB subunits stimulates ATP hydrolysis and nucleotide exchange. Immobilization of the converter enables RuvB to convert the ATP-contained energy into a lever motion, pulling 2 nucleotides of DNA out of the RuvA tetramer per ATP hydrolyzed, thus driving DNA branch migration. The RuvB motors rotate together with the DNA substrate, which together with the progressing nucleotide cycle form the mechanistic basis for DNA recombination by continuous HJ branch migration. Branch migration allows RuvC to scan DNA until it finds its consensus sequence, where it cleaves and resolves cruciform DNA. The sequence is that of Holliday junction branch migration complex subunit RuvB from Shewanella sp. (strain ANA-3).